The chain runs to 149 residues: Transcription factor Atoh7 (149 aa).

A bHLH domain is found at 41–93 (RRRLAANARERRRMQGLNTAFDRLRRVVPQWGQDKKLSKYETLQMALSYIIAL).

In terms of assembly, forms a heterodimer with TCF3 isoform E47; interaction may be required for DNA-binding in certain situations. In terms of tissue distribution, expressed in retinal ganglion cells. Expressed in the cerebellum, trapezoid body, ventral nucleus of the lateral lamniscus and in areas of the auditory hindbrain such as the cochlear nucleus, lateral superior olive and medial nucleus of the trapezoid body. Expressed in the modiolar nerve root and in the cochlear in a small group of bushy neurons within the acoustic nerve. Expressed weakly in the sensory epithelia of the saccule and utricle.

The protein localises to the nucleus. Its subcellular location is the perikaryon. The protein resides in the cell projection. It is found in the axon. Its function is as follows. Transcription factor that binds to DNA at the consensus sequence 5'-CAG[GC]TG-3'. Dimerization with TCF3 isoform E47 may be required in certain situations. Binds to gene promoters and enhancer elements, and thereby regulates a transcriptional program of retinal ganglion cell (RGC) determinant genes. Although the exact mechanism is not certain, retinal transcription regulation by ATOH7 has a role in RGC determination and survival, photoreceptor population development, targeting of RGC axons to the optic nerve and development of the retino-hypothalamic tract. Binds to its own promoter and enhancer sequences, suggesting autoregulation of ATOH7 transcription. Required for retinal circadian rhythm photoentrainment. Plays a role in brainstem auditory signaling and binaural processing. The protein is Transcription factor Atoh7 of Mus musculus (Mouse).